Here is a 260-residue protein sequence, read N- to C-terminus: MLLLVDAGNTRIKWALVDRSAPEQTPGKWLQQGSVARAEAGTLIEAWRGFSIGRVMLSNVAGHELRGELERAVLHTLGTRPVALEWFASAAELGGVRNRYLNPTQLGADRFAAAIGAHALFPEGPLVVATCGTATTVDALSAGGEFIGGMILPGLGLMASSLAKNTAQLPQVALQSTLTQPFADNTDAAIVSGCLAAQAGAIERAVAAQMRTYPNLPIPCILAGGAADLIAPHLSIDYTRVDNLVLIGLHTVAIQHSPTC.

6–13 provides a ligand contact to ATP; it reads DAGNTRIK. Residues Tyr-100 and 107–110 each bind substrate; that span reads GADR. Asp-109 acts as the Proton acceptor in catalysis. Thr-133 contributes to the ATP binding site. Position 186 (Thr-186) interacts with substrate.

Belongs to the type III pantothenate kinase family. Homodimer. The cofactor is NH4(+). K(+) is required as a cofactor.

The protein localises to the cytoplasm. The catalysed reaction is (R)-pantothenate + ATP = (R)-4'-phosphopantothenate + ADP + H(+). The protein operates within cofactor biosynthesis; coenzyme A biosynthesis; CoA from (R)-pantothenate: step 1/5. Its function is as follows. Catalyzes the phosphorylation of pantothenate (Pan), the first step in CoA biosynthesis. In Janthinobacterium sp. (strain Marseille) (Minibacterium massiliensis), this protein is Type III pantothenate kinase.